The following is a 285-amino-acid chain: Release factor glutamine methyltransferase (285 aa).

The S-adenosyl-L-methionine site is built by D143 and N189. Substrate is bound at residue 189–192 (NPPY).

It belongs to the protein N5-glutamine methyltransferase family. PrmC subfamily.

It catalyses the reaction L-glutaminyl-[peptide chain release factor] + S-adenosyl-L-methionine = N(5)-methyl-L-glutaminyl-[peptide chain release factor] + S-adenosyl-L-homocysteine + H(+). Methylates the class 1 translation termination release factors RF1/PrfA and RF2/PrfB on the glutamine residue of the universally conserved GGQ motif. The protein is Release factor glutamine methyltransferase of Clostridium acetobutylicum (strain ATCC 824 / DSM 792 / JCM 1419 / IAM 19013 / LMG 5710 / NBRC 13948 / NRRL B-527 / VKM B-1787 / 2291 / W).